The chain runs to 493 residues: Guanosine-5'-triphosphate,3'-diphosphate pyrophosphatase (493 aa).

It belongs to the GppA/Ppx family. GppA subfamily.

It catalyses the reaction guanosine 3'-diphosphate 5'-triphosphate + H2O = guanosine 3',5'-bis(diphosphate) + phosphate + H(+). It functions in the pathway purine metabolism; ppGpp biosynthesis; ppGpp from GTP: step 2/2. Its function is as follows. Catalyzes the conversion of pppGpp to ppGpp. Guanosine pentaphosphate (pppGpp) is a cytoplasmic signaling molecule which together with ppGpp controls the 'stringent response', an adaptive process that allows bacteria to respond to amino acid starvation, resulting in the coordinated regulation of numerous cellular activities. The chain is Guanosine-5'-triphosphate,3'-diphosphate pyrophosphatase from Salmonella choleraesuis (strain SC-B67).